Here is a 415-residue protein sequence, read N- to C-terminus: Multidrug resistance protein MdtA (415 aa).

A signal peptide spans 1–21 (MKSTVKKRGWVIAGIVVVALA). A disordered region spans residues 387-415 (AQTAADAAKPERGERAPTDSARAAKGARS). A compositionally biased stretch (basic and acidic residues) spans 394 to 403 (AKPERGERAP).

It belongs to the membrane fusion protein (MFP) (TC 8.A.1) family. Part of a tripartite efflux system composed of MdtA, MdtB and MdtC.

The protein resides in the cell inner membrane. The polypeptide is Multidrug resistance protein MdtA (Cronobacter turicensis (strain DSM 18703 / CCUG 55852 / LMG 23827 / z3032)).